Consider the following 321-residue polypeptide: Glycerol-3-phosphate phosphatase (321 aa).

The active-site Nucleophile is aspartate 34. Residues aspartate 34, aspartate 36, and aspartate 260 each coordinate Mg(2+). Aspartate 36 acts as the Proton donor in catalysis.

This sequence belongs to the HAD-like hydrolase superfamily. CbbY/CbbZ/Gph/YieH family. Homodimer. The cofactor is Mg(2+). Expression was confirmed in liver, adipose tissue, testis and pancreatic islet.

It catalyses the reaction O-phospho-L-tyrosyl-[protein] + H2O = L-tyrosyl-[protein] + phosphate. The catalysed reaction is sn-glycerol 1-phosphate + H2O = glycerol + phosphate. The enzyme catalyses sn-glycerol 3-phosphate + H2O = glycerol + phosphate. Functionally, glycerol-3-phosphate phosphatase hydrolyzing glycerol-3-phosphate into glycerol. Thereby, regulates the cellular levels of glycerol-3-phosphate a metabolic intermediate of glucose, lipid and energy metabolism. Was also shown to have a 2-phosphoglycolate phosphatase activity and a tyrosine-protein phosphatase activity. However, their physiological relevance is unclear. In vitro, also has a phosphatase activity toward ADP, ATP, GDP and GTP. This Rattus norvegicus (Rat) protein is Glycerol-3-phosphate phosphatase.